We begin with the raw amino-acid sequence, 513 residues long: ATP synthase subunit alpha (513 aa).

169–176 (GDRQTGKT) provides a ligand contact to ATP.

The protein belongs to the ATPase alpha/beta chains family. As to quaternary structure, F-type ATPases have 2 components, CF(1) - the catalytic core - and CF(0) - the membrane proton channel. CF(1) has five subunits: alpha(3), beta(3), gamma(1), delta(1), epsilon(1). CF(0) has three main subunits: a(1), b(2) and c(9-12). The alpha and beta chains form an alternating ring which encloses part of the gamma chain. CF(1) is attached to CF(0) by a central stalk formed by the gamma and epsilon chains, while a peripheral stalk is formed by the delta and b chains.

The protein resides in the cell inner membrane. The enzyme catalyses ATP + H2O + 4 H(+)(in) = ADP + phosphate + 5 H(+)(out). Its function is as follows. Produces ATP from ADP in the presence of a proton gradient across the membrane. The alpha chain is a regulatory subunit. The sequence is that of ATP synthase subunit alpha from Pectobacterium carotovorum subsp. carotovorum (strain PC1).